A 346-amino-acid chain; its full sequence is 4-hydroxy-2-oxovalerate aldolase 2 (346 aa).

The region spanning 8-260 (VTVHDMTLRD…ETGVDVFKIQ (253 aa)) is the Pyruvate carboxyltransferase domain. 16-17 (RD) contacts substrate. Residue aspartate 17 participates in Mn(2+) binding. Histidine 20 functions as the Proton acceptor in the catalytic mechanism. Residues serine 170 and histidine 199 each contribute to the substrate site. Residues histidine 199 and histidine 201 each contribute to the Mn(2+) site. Tyrosine 290 serves as a coordination point for substrate.

This sequence belongs to the 4-hydroxy-2-oxovalerate aldolase family.

The enzyme catalyses (S)-4-hydroxy-2-oxopentanoate = acetaldehyde + pyruvate. The chain is 4-hydroxy-2-oxovalerate aldolase 2 (bphX3) from Metapseudomonas furukawaii (Pseudomonas furukawaii).